The chain runs to 189 residues: Elongation factor P (189 aa).

N6-(3,6-diaminohexanoyl)-5-hydroxylysine is present on Lys34.

Belongs to the elongation factor P family. Post-translationally, may be beta-lysylated on the epsilon-amino group of Lys-34 by the combined action of EpmA and EpmB, and then hydroxylated on the C5 position of the same residue by EpmC (if this protein is present). Lysylation is critical for the stimulatory effect of EF-P on peptide-bond formation. The lysylation moiety may extend toward the peptidyltransferase center and stabilize the terminal 3-CCA end of the tRNA. Hydroxylation of the C5 position on Lys-34 may allow additional potential stabilizing hydrogen-bond interactions with the P-tRNA.

Its subcellular location is the cytoplasm. Its pathway is protein biosynthesis; polypeptide chain elongation. In terms of biological role, involved in peptide bond synthesis. Alleviates ribosome stalling that occurs when 3 or more consecutive Pro residues or the sequence PPG is present in a protein, possibly by augmenting the peptidyl transferase activity of the ribosome. Modification of Lys-34 is required for alleviation. In Buchnera aphidicola subsp. Acyrthosiphon pisum (strain APS) (Acyrthosiphon pisum symbiotic bacterium), this protein is Elongation factor P.